The sequence spans 138 residues: Transcription antitermination protein NusB (138 aa).

This sequence belongs to the NusB family.

Functionally, involved in transcription antitermination. Required for transcription of ribosomal RNA (rRNA) genes. Binds specifically to the boxA antiterminator sequence of the ribosomal RNA (rrn) operons. The polypeptide is Transcription antitermination protein NusB (Helicobacter pylori (strain P12)).